Consider the following 266-residue polypeptide: Phosphatidylglycerol--prolipoprotein diacylglyceryl transferase (266 aa).

The next 7 helical transmembrane spans lie at 10-30 (VALA…LIGI), 56-76 (LVFW…VLFY), 92-112 (WKGG…VWWF), 120-140 (FFQL…AGRI), 171-191 (PSQL…LWLF), 199-219 (ASVS…VEFV), and 233-253 (WLTM…ALMV). An a 1,2-diacyl-sn-glycero-3-phospho-(1'-sn-glycerol)-binding site is contributed by Arg-139.

The protein belongs to the Lgt family.

It localises to the cell inner membrane. It carries out the reaction L-cysteinyl-[prolipoprotein] + a 1,2-diacyl-sn-glycero-3-phospho-(1'-sn-glycerol) = an S-1,2-diacyl-sn-glyceryl-L-cysteinyl-[prolipoprotein] + sn-glycerol 1-phosphate + H(+). Its pathway is protein modification; lipoprotein biosynthesis (diacylglyceryl transfer). Its function is as follows. Catalyzes the transfer of the diacylglyceryl group from phosphatidylglycerol to the sulfhydryl group of the N-terminal cysteine of a prolipoprotein, the first step in the formation of mature lipoproteins. In Pseudomonas paraeruginosa (strain DSM 24068 / PA7) (Pseudomonas aeruginosa (strain PA7)), this protein is Phosphatidylglycerol--prolipoprotein diacylglyceryl transferase.